The primary structure comprises 877 residues: Protein SEY1 homolog (877 aa).

Topologically, residues 1–735 (MVAFAGGART…LRSIEGEKQN (735 aa)) are cytoplasmic. Positions 49 to 307 (GITYHVVGVL…VPLDGIPSYL (259 aa)) constitute a GB1/RHD3-type G domain. 59-66 (GGQSSGKS) provides a ligand contact to GTP. The stretch at 388–410 (RIDIVRKTEAELEEELLKVELKL) forms a coiled coil. The chain crosses the membrane as a helical span at residues 736–756 (LPAWVLPVLLLLGWNEIWYVL). Residues 757-759 (SSP) are Lumenal-facing. The helical transmembrane segment at 760–780 (VLLVVVVIIAAVFLRGFLLTQ) threads the bilayer. Over 781–877 (WAIFEETGPT…KEEEVPTQKE (97 aa)) the chain is Cytoplasmic. The segment at 850 to 877 (PTVLPPSTTSATLTRRLKKEEEVPTQKE) is disordered. A compositionally biased stretch (basic and acidic residues) spans 867–877 (KKEEEVPTQKE).

It belongs to the TRAFAC class dynamin-like GTPase superfamily. GB1/RHD3 GTPase family. RHD3 subfamily.

It is found in the endoplasmic reticulum membrane. In terms of biological role, probable GTP-binding protein that may be involved in cell development. This is Protein SEY1 homolog from Trypanosoma cruzi (strain CL Brener).